Consider the following 73-residue polypeptide: Translation initiation factor IF-1 (73 aa).

Positions 1–73 constitute an S1-like domain; sequence MANKEELIEF…TKGRITYRAR (73 aa).

It belongs to the IF-1 family. As to quaternary structure, component of the 30S ribosomal translation pre-initiation complex which assembles on the 30S ribosome in the order IF-2 and IF-3, IF-1 and N-formylmethionyl-tRNA(fMet); mRNA recruitment can occur at any time during PIC assembly.

It localises to the cytoplasm. Its function is as follows. One of the essential components for the initiation of protein synthesis. Stabilizes the binding of IF-2 and IF-3 on the 30S subunit to which N-formylmethionyl-tRNA(fMet) subsequently binds. Helps modulate mRNA selection, yielding the 30S pre-initiation complex (PIC). Upon addition of the 50S ribosomal subunit IF-1, IF-2 and IF-3 are released leaving the mature 70S translation initiation complex. This is Translation initiation factor IF-1 from Acinetobacter baumannii (strain ATCC 17978 / DSM 105126 / CIP 53.77 / LMG 1025 / NCDC KC755 / 5377).